We begin with the raw amino-acid sequence, 475 residues long: Glutamate--tRNA ligase 2 (475 aa).

Positions 11–21 match the 'HIGH' region motif; it reads PSPTGFLHIGG. The segment covering 116-133 has biased composition (basic and acidic residues); it reads AEGRPPRYDGTWRDKDPA. The segment at 116-137 is disordered; sequence AEGRPPRYDGTWRDKDPAEAPS. The 'KMSKS' region motif lies at 240 to 244; the sequence is KLSKR. Lys243 serves as a coordination point for ATP.

The protein belongs to the class-I aminoacyl-tRNA synthetase family. Glutamate--tRNA ligase type 1 subfamily. Monomer.

The protein localises to the cytoplasm. It carries out the reaction tRNA(Glu) + L-glutamate + ATP = L-glutamyl-tRNA(Glu) + AMP + diphosphate. In terms of biological role, catalyzes the attachment of glutamate to tRNA(Glu) in a two-step reaction: glutamate is first activated by ATP to form Glu-AMP and then transferred to the acceptor end of tRNA(Glu). The sequence is that of Glutamate--tRNA ligase 2 from Chelativorans sp. (strain BNC1).